The following is a 425-amino-acid chain: Enolase (425 aa).

A disordered region spans residues threonine 31 to aspartate 54. Basic and acidic residues predominate over residues glycine 43–aspartate 54. A (2R)-2-phosphoglycerate-binding site is contributed by glutamine 162. Glutamate 204 (proton donor) is an active-site residue. Residues aspartate 241, glutamate 285, and aspartate 312 each coordinate Mg(2+). Lysine 337, arginine 366, serine 367, and lysine 388 together coordinate (2R)-2-phosphoglycerate. Lysine 337 functions as the Proton acceptor in the catalytic mechanism.

It belongs to the enolase family. It depends on Mg(2+) as a cofactor.

It localises to the cytoplasm. The protein localises to the secreted. It is found in the cell surface. It carries out the reaction (2R)-2-phosphoglycerate = phosphoenolpyruvate + H2O. It participates in carbohydrate degradation; glycolysis; pyruvate from D-glyceraldehyde 3-phosphate: step 4/5. Functionally, catalyzes the reversible conversion of 2-phosphoglycerate (2-PG) into phosphoenolpyruvate (PEP). It is essential for the degradation of carbohydrates via glycolysis. This Gloeobacter violaceus (strain ATCC 29082 / PCC 7421) protein is Enolase.